We begin with the raw amino-acid sequence, 266 residues long: MWCKDPFLTYLKEFGYNVIRLPKADVKPLQVLARCGKDLNRLGEINNLLVAGDSIPLPRLKENTRAASISGQRTGDLSVGVGLSILGTVLGAMGGSKLGLDTKYQNAKTTMFEFQDVFEDTVEIIELDKFLGDADINPFSRHVAELLEADDLYITTSTIKSTKFTIEAKKSDGTALELTIPDIQGIVGGNVKVSGAASVTSKICYESPIPLVFGFQAVRLFYDNGRYTAIEPLDSGSAGMKALGKAPSDGAARLMTDGPFLRLTGV.

Cysteine 3 carries the S-palmitoyl cysteine lipid modification. The next 4 beta stranded transmembrane spans lie at 69 to 85, 97 to 115, 163 to 180, and 189 to 205; these read ISGQRTGDLSVGVGLSI, KLGLDTKYQNAKTTMFEFQ, KFTIEAKKSDGTALELTI, and GNVKVSGAASVTSKICY.

It belongs to the bacterial gasdermin family. Monomer. In terms of assembly, forms large, homooligomeric ring-shaped pores when inserted in membranes. Palmitoylation helps stabilize the inactive state; may self palmitoylate. Palmitoylation plays a significant role in pore formation.

The protein localises to the cytoplasm. The protein resides in the cell inner membrane. The full-length protein before cleavage is inactive: intramolecular interactions between the N-terminal domain and the C-terminal region as well as the lipid modification, mediate autoinhibition. The pyroptosis-like-inducing activity is carried by the released N-terminal domain (Gasdermin bGSDM, N-terminus). Precursor of a pore-forming protein involved in defense against bacteriophages. Expression of bGSDM and the neighboring protease gene (Ga0182885_104520) is toxic in E.coli. Cleavage of this precursor by its dedicated protease releases the active moiety (gasdermin bGSDM, N-terminus) which inserts into membranes, forming pores and triggering cell death. Its function is as follows. Pore-forming protein that causes membrane permeabilization via a pyroptosis-like activity. Makes ring-like pores when released. This Desulfuromonadales bacterium protein is Gasdermin bGSDM.